The following is a 322-amino-acid chain: Aldo-keto reductase family 1 member C13 (322 aa).

NAD(+) contacts are provided by residues 20 to 24 and Asp50; that span reads GFGTY. Tyr55 acts as the Proton donor in catalysis. His117 lines the substrate pocket. NAD(+) contacts are provided by residues 166–167, Gln190, 216–224, and 270–280; these read SN, FGALGTQRY, and QSFYESEMKEN.

The protein belongs to the aldo/keto reductase family. As to quaternary structure, monomer. In terms of processing, the N-terminus is blocked.

It catalyses the reaction morphine + NAD(+) = morphinone + NADH + H(+). It carries out the reaction morphine + NADP(+) = morphinone + NADPH + H(+). Its activity is regulated as follows. Strongly inhibited by sulfhydryl reagents and ketamine, but not by pyrazole, barbital and indomethacine. In terms of biological role, catalyzes the dehydrogenation of morphine to morphinone. The enzyme also exhibits significant activity for a variety of cyclic and alicyclic alcohols. In addition to xenobiotics, the enzyme catalyzes the dehydrogenation of 17-beta-hydroxysteroids with much higher affinities than morphine. Uses both NAD and NADP, but the activity is much greater with NAD than with NADP. The sequence is that of Aldo-keto reductase family 1 member C13 (AKR1C13) from Mesocricetus auratus (Golden hamster).